The chain runs to 364 residues: DNA polymerase IV (364 aa).

In terms of domain architecture, UmuC spans 14 to 198 (IIHIDMDAFF…LPIEKFHGVG (185 aa)). Mg(2+) is bound by residues Asp-18 and Asp-116. Residue Glu-117 is part of the active site.

The protein belongs to the DNA polymerase type-Y family. Monomer. It depends on Mg(2+) as a cofactor.

It is found in the cytoplasm. The enzyme catalyses DNA(n) + a 2'-deoxyribonucleoside 5'-triphosphate = DNA(n+1) + diphosphate. Functionally, poorly processive, error-prone DNA polymerase involved in untargeted mutagenesis. Copies undamaged DNA at stalled replication forks, which arise in vivo from mismatched or misaligned primer ends. These misaligned primers can be extended by PolIV. Exhibits no 3'-5' exonuclease (proofreading) activity. May be involved in translesional synthesis, in conjunction with the beta clamp from PolIII. The chain is DNA polymerase IV from Streptococcus pyogenes serotype M18 (strain MGAS8232).